The sequence spans 1035 residues: MVVFVGRRLPALLGLFKKKGSAKAENDKHLSVGPGQGPGSAVDEHQDNVFFPSGRPPHLEELHTQAQEGLRSLQHQEKQKLNKGGWDHGDTQSIQSSRTGPDEDNISFCSQTTSYVAESSTAEDALSIRSEMIQRKGSTFRPHDSFPKSGKSGRRRRERRSTVLGLPQHVQKELGLRNEREAPGTPRAPGARDAVRIPTVDGRPRGTSGMGARVSLQALEAEAEAGAETEAMLQRHIDRVYRDDTFVGRSTGTRAPPLTRPMSLAVPGLTGGAGPAEPLSPAMSISPQATYLSKLIPHAVLPPTVDVVALGRCSLRTLSRCSLHSASPASVRSLGRFSSVSSPQPRSRHPSSSSDTWSHSQSSDTIVSDGSTLSSKGGSEGQPESSTASNSVVPPPQGGSGRGSPSGGSTAEASDTLSIRSSGQLSGRSVSLRKLKRPPPPPRRTHSLHQRGLAVPDGPLGLPPKPERKQQPQLPRPPTTGGSEGAGAAPCPPNPANSWVPGLSPGGSRRPPRSPERTLSPSSGYSSQSGTPTLPPKGLAGPPASPGKAQPPKPERVTSLRSPGASVSSSLTSLCSSSSDPAPSDRSGPQILTPLGDRFVIPPHPKVPAPFSPPPSKPRSPNPAAPALAAPAVVPGPVSTTDASPQSPPTPQTTLTPLQESPVISKDQSPPPSPPPSYHPPPPPTKKPEVVVEAPSASETAEEPLQDPNWPPPPPPAPEEQDLSMADFPPPEEAFFSVASPEPAGPSGSPELVSSPAASSSSATALQIQPPGSPDPPPAPPAPAPASSAPGHVAKLPQKEPVGCSKGGGPPREDVGAPLVTPSLLQMVRLRSVGAPGGAPTPALGPSAPQKPLRRALSGRASPVPAPSSGLHAAVRLKACSLAASEGLSSAQPNGPPEAEPRPPQSPASTASFIFSKGSRKLQLERPVSPETQADLQRNLVAELRSISEQRPPQAPKKSPKAPPPVARKPSVGVPPPASPSYPRAEPLTAPPTNGLPHTQDRTKRELAENGGVLQLVGPEEKMGLPGSDSQKELA.

A lipid anchor (N-myristoyl glycine) is attached at Val2. Disordered regions lie at residues 23 to 44, 76 to 105, and 133 to 162; these read KAEN…AVDE, QEKQ…DEDN, and IQRK…RRST. Positions 76-90 are enriched in basic and acidic residues; it reads QEKQKLNKGGWDHGD. A phosphoserine mark is found at Ser93, Ser138, Ser145, and Ser161. At Thr162 the chain carries Phosphothreonine. A Phosphoserine modification is found at Ser215. Residue Arg320 is modified to Asymmetric dimethylarginine. 7 positions are modified to phosphoserine: Ser322, Ser327, Ser330, Ser338, Ser339, Ser341, and Ser342. Disordered regions lie at residues 332–869 and 885–1035; these read RSLG…APSS and SEGL…KELA. Low complexity predominate over residues 338 to 365; that stretch reads SSVSSPQPRSRHPSSSSDTWSHSQSSDT. The span at 366–388 shows a compositional bias: polar residues; it reads IVSDGSTLSSKGGSEGQPESSTA. Residues Ser400, Ser404, and Ser409 each carry the phosphoserine modification. Positions 411 to 429 are enriched in polar residues; sequence AEASDTLSIRSSGQLSGRS. Positions 431–449 are enriched in basic residues; the sequence is SLRKLKRPPPPPRRTHSLH. Positions 517-532 are enriched in low complexity; it reads RTLSPSSGYSSQSGTP. Thr531 is modified (phosphothreonine). Pro residues predominate over residues 543–552; it reads PASPGKAQPP. Ser545 is modified (phosphoserine). Residues 562–589 are compositionally biased toward low complexity; that stretch reads SPGASVSSSLTSLCSSSSDPAPSDRSGP. Thr593 carries the post-translational modification Phosphothreonine. Pro residues predominate over residues 602–624; it reads PPHPKVPAPFSPPPSKPRSPNPA. Ser612 is modified (phosphoserine). 2 stretches are compositionally biased toward low complexity: residues 625–645 and 652–662; these read APAL…DASP and QTTLTPLQESP. Phosphoserine occurs at positions 669 and 673. 2 stretches are compositionally biased toward pro residues: residues 669–685 and 709–718; these read SPPP…PPPT and NWPPPPPPAP. Low complexity predominate over residues 737-765; sequence SVASPEPAGPSGSPELVSSPAASSSSATA. The segment covering 771–784 has biased composition (pro residues); it reads PGSPDPPPAPPAPA. Residues 838–848 are compositionally biased toward low complexity; sequence GAPTPALGPSA. Residues Ser858, Ser862, and Ser868 each carry the phosphoserine modification. Residues 894-906 are compositionally biased toward pro residues; the sequence is NGPPEAEPRPPQS. A phosphoserine mark is found at Ser929, Ser959, Ser971, and Ser979. The segment covering 961–980 has biased composition (pro residues); that stretch reads KAPPPVARKPSVGVPPPASP. Residues 999 to 1008 are compositionally biased toward basic and acidic residues; sequence TQDRTKRELA.

In terms of tissue distribution, expressed in lung.

Able to directly activate the TNF-NFkappaB signaling pathway. The protein is NHS-like protein 3 of Homo sapiens (Human).